A 41-amino-acid chain; its full sequence is Large ribosomal subunit protein bL36 (41 aa).

The protein belongs to the bacterial ribosomal protein bL36 family.

This is Large ribosomal subunit protein bL36 from Brucella abortus (strain S19).